Reading from the N-terminus, the 496-residue chain is 6-phosphogluconate dehydrogenase, decarboxylating (496 aa).

NADP(+) is bound by residues 13-18 (GLDVSI), 24-26 (DNV), 68-70 (ITH), and Asn-96. Residues Asn-96 and 122–124 (SGG) contribute to the substrate site. Lys-178 acts as the Proton acceptor in catalysis. A substrate-binding site is contributed by 181–182 (HN). Glu-185 functions as the Proton donor in the catalytic mechanism. Substrate contacts are provided by Arg-300 and His-468. A disordered region spans residues 476 to 496 (PGEDPGPVSKGPHHYEWRPAK).

The protein belongs to the 6-phosphogluconate dehydrogenase family. As to quaternary structure, homodimer.

Its subcellular location is the cytoplasm. It carries out the reaction 6-phospho-D-gluconate + NADP(+) = D-ribulose 5-phosphate + CO2 + NADPH. It participates in carbohydrate degradation; pentose phosphate pathway; D-ribulose 5-phosphate from D-glucose 6-phosphate (oxidative stage): step 3/3. In terms of biological role, catalyzes the oxidative decarboxylation of 6-phosphogluconate to ribulose 5-phosphate and CO(2), with concomitant reduction of NADP to NADPH. The chain is 6-phosphogluconate dehydrogenase, decarboxylating from Emericella nidulans (strain FGSC A4 / ATCC 38163 / CBS 112.46 / NRRL 194 / M139) (Aspergillus nidulans).